Reading from the N-terminus, the 153-residue chain is Transcriptional repressor NrdR (153 aa).

A zinc finger lies at 3 to 34; it reads CPFCGHLEDRVIDSRAGGAGEVIRRRRECASC. One can recognise an ATP-cone domain in the interval 49-139; that stretch reads PTVVKKDGRR…VYRSFRDIDQ (91 aa).

This sequence belongs to the NrdR family. The cofactor is Zn(2+).

Negatively regulates transcription of bacterial ribonucleotide reductase nrd genes and operons by binding to NrdR-boxes. This chain is Transcriptional repressor NrdR, found in Sorangium cellulosum (strain So ce56) (Polyangium cellulosum (strain So ce56)).